A 148-amino-acid chain; its full sequence is Large ribosomal subunit protein cL37 (148 aa).

The transit peptide at methionine 1–alanine 65 directs the protein to the chloroplast. Alanine 66 is subject to N-acetylalanine. Residues leucine 125 to valine 148 form a disordered region.

It belongs to the chloroplast-specific ribosomal protein cL37 family. Part of the 50S ribosomal subunit.

Its subcellular location is the plastid. It localises to the chloroplast. This is Large ribosomal subunit protein cL37 (PSRP5) from Arabidopsis thaliana (Mouse-ear cress).